The chain runs to 350 residues: THUMP domain-containing protein 1 (350 aa).

A compositionally biased stretch (polar residues) spans 1 to 10; it reads MATTAQQSPQ. Disordered regions lie at residues 1–42 and 75–96; these read MATT…LEPG and PEKFIDKDQQPSGSEGEDDDAE. A2 carries the post-translational modification N-acetylalanine. S8, S86, S88, and S119 each carry phosphoserine. The THUMP domain occupies 147–254; sequence DMYKTKKKKT…KAVCCLSVVK (108 aa). Residue S270 is modified to Phosphoserine. The span at 270 to 292 shows a compositional bias: basic and acidic residues; sequence SAKDSQPHPKLGNGKEAKLEPDS. Positions 270–350 are disordered; that stretch reads SAKDSQPHPK…VPKTNENELS (81 aa).

The protein belongs to the THUMPD1 family. Interacts with NAT10. Binds tRNA.

In terms of biological role, functions as a tRNA-binding adapter to mediate NAT10-dependent tRNA acetylation modifying cytidine to N4-acetylcytidine (ac4C). The sequence is that of THUMP domain-containing protein 1 (Thumpd1) from Mus musculus (Mouse).